Here is a 322-residue protein sequence, read N- to C-terminus: HPr kinase/phosphorylase (322 aa).

Residues H146 and K167 contribute to the active site. 161-168 (GDSGLGKS) is an ATP binding site. S168 contacts Mg(2+). D185 functions as the Proton acceptor; for phosphorylation activity. Proton donor; for dephosphorylation activity in the catalytic mechanism. The segment at 209 to 218 (LEVRGLGLLD) is important for the catalytic mechanism of both phosphorylation and dephosphorylation. Residue E210 coordinates Mg(2+). Residue R250 is part of the active site. An important for the catalytic mechanism of dephosphorylation region spans residues 271-276 (QVAAGR).

Belongs to the HPrK/P family. In terms of assembly, homohexamer. Mg(2+) serves as cofactor.

It carries out the reaction [HPr protein]-L-serine + ATP = [HPr protein]-O-phospho-L-serine + ADP + H(+). It catalyses the reaction [HPr protein]-O-phospho-L-serine + phosphate + H(+) = [HPr protein]-L-serine + diphosphate. Catalyzes the ATP- as well as the pyrophosphate-dependent phosphorylation of a specific serine residue in HPr, a phosphocarrier protein of the phosphoenolpyruvate-dependent sugar phosphotransferase system (PTS). HprK/P also catalyzes the pyrophosphate-producing, inorganic phosphate-dependent dephosphorylation (phosphorolysis) of seryl-phosphorylated HPr (P-Ser-HPr). The polypeptide is HPr kinase/phosphorylase (Paraburkholderia xenovorans (strain LB400)).